The primary structure comprises 217 residues: Heart- and neural crest derivatives-expressed protein 2 (217 aa).

Residues 76–116 form a disordered region; it reads DHSHYGGVPPGAGPPGLGGPRPVKRRGTANRKERRRTQSIN. The span at 83 to 94 shows a compositional bias: gly residues; that stretch reads VPPGAGPPGLGG. A compositionally biased stretch (basic residues) spans 97–112; it reads PVKRRGTANRKERRRT. The bHLH domain occupies 99–151; it reads KRRGTANRKERRRTQSINSAFAELRECIPNVPADTKLSKIKTLRLATSYIAYL.

Efficient DNA binding requires dimerization with another bHLH protein. Forms homodimers and heterodimers with TCF3 gene products E12 and E47, HAND1 and HEY1, HEY2 and HEYL (hairy-related transcription factors).

The protein resides in the nucleus. Its function is as follows. Essential for cardiac morphogenesis, particularly for the formation of the right ventricle and of the aortic arch arteries. Required for vascular development and regulation of angiogenesis, possibly through a VEGF signaling pathway. Also plays an important role in limb development, particularly in the establishment of anterior-posterior polarization, acting as an upstream regulator of sonic hedgehog (SHH) induction in the limb bud. Is involved in the development of branchial arches, which give rise to unique structures in the head and neck. Binds DNA on E-box consensus sequence 5'-CANNTG-3'. The chain is Heart- and neural crest derivatives-expressed protein 2 (Hand2) from Rattus norvegicus (Rat).